A 466-amino-acid polypeptide reads, in one-letter code: Probable ribonuclease FAU-1 (466 aa).

Residues 90 to 152 (GAIYAGTVTD…TDGRPVLDTT (63 aa)) enclose the S1 motif domain.

This sequence belongs to the FAU-1 family.

Its function is as follows. Probable RNase involved in rRNA stability through maturation and/or degradation of precursor rRNAs. Binds to RNA in loop regions with AU-rich sequences. This Haloarcula marismortui (strain ATCC 43049 / DSM 3752 / JCM 8966 / VKM B-1809) (Halobacterium marismortui) protein is Probable ribonuclease FAU-1.